Reading from the N-terminus, the 222-residue chain is Small ribosomal subunit protein uS3 (222 aa).

One can recognise a KH type-2 domain in the interval 39 to 108 (IRKFIKKELF…NVLINIVEVK (70 aa)).

The protein belongs to the universal ribosomal protein uS3 family. In terms of assembly, part of the 30S ribosomal subunit. Forms a tight complex with proteins S10 and S14.

In terms of biological role, binds the lower part of the 30S subunit head. Binds mRNA in the 70S ribosome, positioning it for translation. In Clostridium perfringens (strain ATCC 13124 / DSM 756 / JCM 1290 / NCIMB 6125 / NCTC 8237 / Type A), this protein is Small ribosomal subunit protein uS3.